The sequence spans 184 residues: Photosystem I assembly protein Ycf4 (184 aa).

Transmembrane regions (helical) follow at residues 19 to 39 and 57 to 77; these read ISNL…VLVG and IIFF…LFIS.

Belongs to the Ycf4 family.

The protein localises to the plastid thylakoid membrane. In terms of biological role, seems to be required for the assembly of the photosystem I complex. This is Photosystem I assembly protein Ycf4 from Cuscuta reflexa (Southern Asian dodder).